The chain runs to 345 residues: Meiotically up-regulated gene 97 protein (345 aa).

Transmembrane regions (helical) follow at residues 292–312 (MWVL…GLWM) and 319–329 (FAHGMLLNLGI).

Its subcellular location is the membrane. Functionally, required for correct meiotic chromosome segregation. Appears to also have role in sporulation. The chain is Meiotically up-regulated gene 97 protein (mug97) from Schizosaccharomyces pombe (strain 972 / ATCC 24843) (Fission yeast).